We begin with the raw amino-acid sequence, 983 residues long: MTSRMQPKSGVYSVSKADFTKIFEDVPKVPITSAVDLRNKFDAVRIILSNSSEDWNKRQTQLKTVRSLVIHGEKVVDRPTMIAHLVQLLGCFELAVKDLRSQVLREAAITCSFIVSKYGIETHSIGEDILVPAMSQVAVSTKIMATSASTLTEFIVEYVQTRQVFTILSSFSTSKDKSQRRQLAALLEIVISKWSDRIKKQIMRQICELIKSAINDADSETRAAGRRAFAKLDEMHSEEADALYLELDHSKQKMLRGGDAASSWASVNSEKGSIPIRSKLSAGSKAHMNISAKFLAQRSASAIDPKATKFAGPSRLVRPTSTKTMARQDTSPAGCKYSNFISMFFKTLLLSAKIPYPNRPGSRTRTSSITSTDSRDTSPTRRNSPLPPETQKARVKYGNGSFFAKLGMPDTTDDDEFLLPIRIRSPLKTPTIEAHDKVSQVLKECCSSSVSEKKEGIKKLLPIVADTSLNPIEIKNIGNCLNRLLSDASNTMVLEIYSIFVRTHSSRLSEWLRLALAKLFARKAAETLPNTKKQIGHTLNVILECFNAHHQLVTVCELMCDPIHLMVPKARVVLLEYLTSLLDEYTEPGASINAKELKTAIRKMLTWASDPRLSILLTPHVEKAICSMFCVNVADFSALISDLDSEQKNWIHQTLQRNGLENGISSNNIATNSGATASRETSNTSFQKESTSFGLPEFGARKGGTGVNLGSLNISNNLALSRLEEQSTSRLMEKVNLNSTVTLPPDTLEKIQNVQDLLQKMRSSENADEQESAISSIYMMICDGGFGVWEQCYAKLLLNLFEILSKSRSENNKKMCLRILGKMCTAQAAKLFDSTEMAVCKVLDAAVNTNDATTALAVEDCLRTLATHLPLSNIINIAKVILNQEPIDDERASLVLKMVTRLFEELPAEELNNIVDDITPTIIKAYQSTSSTVRKTVVYCLVAMVNRVGEQRMTPHFTKLPKAMTNLIQVYVNRAISTSLPRL.

Disordered regions lie at residues 356–393 and 666–690; these read YPNR…TQKA and SNNI…QKES. Low complexity predominate over residues 359 to 372; the sequence is RPGSRTRTSSITST. An HEAT repeat occupies 918-956; the sequence is ITPTIIKAYQSTSSTVRKTVVYCLVAMVNRVGEQRMTPH.

The protein belongs to the CLASP family.

Its subcellular location is the cytoplasm. It is found in the cytoskeleton. In terms of biological role, microtubule plus-end tracking protein that promotes the stabilization of dynamic microtubules. The chain is Protein CLASP-3 (cls-3) from Caenorhabditis elegans.